We begin with the raw amino-acid sequence, 663 residues long: Transmembrane 9 superfamily member 2 (663 aa).

A signal peptide spans 1-28; that stretch reads MSSRPPASLPARGPRLLLLSLLLLGTVP. At 29–300 the chain is on the lumenal side; the sequence is GPRPGSAFYL…LESMPHTHIQ (272 aa). A helical membrane pass occupies residues 301–321; that stretch reads WFSIMNSLVIVLFLSGMVAMI. The Cytoplasmic portion of the chain corresponds to 322–374; sequence MLRTLHKDIARYNQMDSTEDAQEEFGWKLVHGDIFRPPRKGMLLSVFLGSGTQ. The helical transmembrane segment at 375–395 threads the bilayer; it reads ILIMTFVTLFFACLGFLSPAN. Over 396–398 the chain is Lumenal; it reads RGA. The chain crosses the membrane as a helical span at residues 399-419; the sequence is LMTCAVVLWVLLGTPAGYVAA. Residues 420-437 lie on the Cytoplasmic side of the membrane; the sequence is RFYKSFGGEKWKTNVLLT. A helical transmembrane segment spans residues 438-458; it reads SFLCPGIVFADFFIMNLILWG. At 459 to 466 the chain is on the lumenal side; that stretch reads EGSSAAIP. A helical transmembrane segment spans residues 467–487; it reads FGTLVAILALWFCISVPLTFI. Topologically, residues 488–522 are cytoplasmic; the sequence is GAYFGFKKNAIEHPVRTNQIPRQIPEQSFYTKPLP. Residues 523–543 form a helical membrane-spanning segment; the sequence is GIIMGGILPFGCIFIQLFFIL. Topologically, residues 544–554 are lumenal; the sequence is NSIWSHQMYYM. The helical transmembrane segment at 555-575 threads the bilayer; that stretch reads FGFLFLVFIILVITCSEATIL. Residues 576–591 are Cytoplasmic-facing; it reads LCYFHLCAEDYHWQWR. A helical membrane pass occupies residues 592–612; sequence SFLTSGFTAVYFLVYAIHYFF. Over 613–631 the chain is Lumenal; it reads SKLQITGTASTILYFGYTM. The chain crosses the membrane as a helical span at residues 632 to 652; sequence IMVLIFFLFTGTIGFFACFWF. Topologically, residues 653–663 are cytoplasmic; that stretch reads VTKIYSVVKVD.

It belongs to the nonaspanin (TM9SF) (TC 9.A.2) family.

The protein resides in the endosome membrane. It is found in the golgi outpost. It localises to the cytoplasm. The protein localises to the cytoskeleton. Its subcellular location is the microtubule organizing center. In terms of biological role, in the intracellular compartments, may function as a channel or small molecule transporter. This chain is Transmembrane 9 superfamily member 2 (Tm9sf2), found in Rattus norvegicus (Rat).